The sequence spans 507 residues: Flagellar hook-associated protein 1 (507 aa).

It belongs to the flagella basal body rod proteins family.

The protein localises to the secreted. Its subcellular location is the bacterial flagellum. This is Flagellar hook-associated protein 1 (flgK) from Bacillus subtilis (strain 168).